A 310-amino-acid chain; its full sequence is Uracil phosphoribosyltransferase homolog (310 aa).

Disordered regions lie at residues 1-27 (MASE…PSPE) and 62-89 (SERD…GNYD). The span at 16–25 (RQVNSTSSPS) shows a compositional bias: polar residues. A Phosphoserine modification is found at serine 25. GTP is bound by residues arginine 134, arginine 143, and 177–180 (EKGN). Arginine 187 serves as a coordination point for 5-phospho-alpha-D-ribose 1-diphosphate. GTP is bound by residues arginine 204 and arginine 233. Residue 239-247 (YPILSTGNT) participates in 5-phospho-alpha-D-ribose 1-diphosphate binding. Uracil is bound at residue 300–302 (THF).

It belongs to the UPRTase family.

The protein localises to the cytoplasm. It is found in the nucleus. This is Uracil phosphoribosyltransferase homolog (Uprt) from Mus musculus (Mouse).